Consider the following 479-residue polypeptide: Ubiquinone biosynthesis monooxygenase COQ6, mitochondrial (479 aa).

The N-terminal 17 residues, 1–17 (MFFSKVMLTRRILVRGL), are a transit peptide targeting the mitochondrion.

Belongs to the UbiH/COQ6 family. As to quaternary structure, component of a multi-subunit COQ enzyme complex, composed of at least COQ3, COQ4, COQ5, COQ6, COQ7 and COQ9. Requires FAD as cofactor.

The protein resides in the mitochondrion inner membrane. It carries out the reaction 4-hydroxy-3-(all-trans-hexaprenyl)benzoate + 2 reduced [2Fe-2S]-[ferredoxin] + O2 + 2 H(+) = 3,4-dihydroxy-5-(all-trans-hexaprenyl)benzoate + 2 oxidized [2Fe-2S]-[ferredoxin] + H2O. The catalysed reaction is 2-methoxy-6-(all-trans-hexaprenyl)phenol + 2 reduced [2Fe-2S]-[ferredoxin] + O2 + 2 H(+) = 2-methoxy-6-(all-trans-hexaprenyl)benzene-1,4-diol + 2 oxidized [2Fe-2S]-[ferredoxin] + H2O. It catalyses the reaction 4-amino-3-(all-trans-hexaprenyl)benzoate + 2 reduced [2Fe-2S]-[ferredoxin] + O2 + 2 H(+) = 4-amino-5-hydroxy-3-(all-trans-hexaprenyl)benzoate + 2 oxidized [2Fe-2S]-[ferredoxin] + H2O. The enzyme catalyses 4-amino-5-hydroxy-3-(all-trans-hexaprenyl)benzoate + 4 reduced [2Fe-2S]-[ferredoxin] + O2 + 5 H(+) = 3,4-dihydroxy-5-(all-trans-hexaprenyl)benzoate + 4 oxidized [2Fe-2S]-[ferredoxin] + NH4(+) + H2O. The protein operates within cofactor biosynthesis; ubiquinone biosynthesis. In terms of biological role, FAD-dependent monooxygenase required for two non-consecutive steps during ubiquinone biosynthesis. Required for the C5-ring hydroxylation during ubiquinone biosynthesis by catalyzing the hydroxylation of 4-hydroxy-3-(all-trans-hexaprenyl)benzoic acid to 3,4-dihydroxy-5-(all-trans-hexaprenyl)benzoic acid. Also acts downstream of COQ4, for the C1-hydroxylation during ubiquinone biosynthesis by catalyzing the hydroxylation of 2-methoxy-6-(all-trans-hexaprenyl)phenol to 2-methoxy-6-(all-trans-hexaprenyl)benzene-1,4-diol. The electrons required for the hydroxylation reaction are funneled indirectly from NADPH via ferredoxin (YAH1) and ferredoxin reductase (ARH1) to COQ6. Can also convert 3-hexaprenyl-4-aminobenzoic acid (HAB), a COQ2-prenylated pABA, to DHHB in a two step process. HAB is first hydroxylated at C5 to yield 3-hexaprenyl-4-amino-5-hydroxybenzoic acid (HHAB) which is further deaminated at C4 by COQ6 to produce DHHB. In Saccharomyces cerevisiae (strain ATCC 204508 / S288c) (Baker's yeast), this protein is Ubiquinone biosynthesis monooxygenase COQ6, mitochondrial.